Reading from the N-terminus, the 131-residue chain is Arsenate reductase 2 (131 aa).

Active-site nucleophile residues include Cys-10, Cys-82, and Cys-89. Disulfide bonds link Cys-10-Cys-82 and Cys-82-Cys-89.

The protein belongs to the low molecular weight phosphotyrosine protein phosphatase family. Thioredoxin-coupled ArsC subfamily.

It localises to the cytoplasm. The enzyme catalyses arsenate + [thioredoxin]-dithiol + H(+) = arsenite + [thioredoxin]-disulfide + H2O. Catalyzes the reduction of arsenate [As(V)] to arsenite [As(III)]. The protein is Arsenate reductase 2 of Staphylococcus saprophyticus subsp. saprophyticus (strain ATCC 15305 / DSM 20229 / NCIMB 8711 / NCTC 7292 / S-41).